Reading from the N-terminus, the 399-residue chain is Probable peptidoglycan glycosyltransferase FtsW (399 aa).

The Cytoplasmic portion of the chain corresponds to 1–32; that stretch reads MMAGFAQTTITKINQFYERWMPRLPAEMTARN. A helical membrane pass occupies residues 33-53; sequence VLVFCVVCLLCIGSVMVASAS. The Periplasmic segment spans residues 54-72; the sequence is MPYAEYMHENPFHYVVRHA. A helical membrane pass occupies residues 73 to 93; that stretch reads ISIATAAIVAYLVYKVPLNVW. The Cytoplasmic segment spans residues 94–97; it reads FKNT. A helical membrane pass occupies residues 98–118; the sequence is FSFWLITILLLLAVLVIGTEV. The Periplasmic portion of the chain corresponds to 119–126; sequence NGSRRWIR. The chain crosses the membrane as a helical span at residues 127–147; the sequence is LAGFTLQPTEVAKVMMAIFTA. Over 148-159 the chain is Cytoplasmic; it reads DYVVRRAKEVRT. The helical transmembrane segment at 160 to 180 threads the bilayer; the sequence is HWKGLVRLSGVMAITVGLIIA. The Periplasmic portion of the chain corresponds to 181–183; the sequence is EPD. Residues 184–204 traverse the membrane as a helical segment; sequence LGATVVIVLMMVGIFFLAGAP. Topologically, residues 205-207 are cytoplasmic; that stretch reads PTQ. Residues 208–228 traverse the membrane as a helical segment; that stretch reads FAIMLGAVVMGIGFLILFEPY. At 229 to 292 the chain is on the periplasmic side; the sequence is RLARAMSFTN…DFMLAVLGEE (64 aa). Residues 293–313 form a helical membrane-spanning segment; that stretch reads FGFVGISIVIGLSFIMLACCI. Over 314 to 327 the chain is Cytoplasmic; the sequence is KIGHRALKHNFLRA. The chain crosses the membrane as a helical span at residues 328-348; the sequence is GYLAYGISIIFLLQIIVNAGM. Residues 349 to 359 are Periplasmic-facing; the sequence is NMGLMPTKGLT. Residues 360–380 traverse the membrane as a helical segment; sequence LPFISYGGTSLMMCAAMISLI. At 381 to 399 the chain is on the cytoplasmic side; it reads LRIDASTQEINPDREESNF.

It belongs to the SEDS family. FtsW subfamily.

It localises to the cell inner membrane. It catalyses the reaction [GlcNAc-(1-&gt;4)-Mur2Ac(oyl-L-Ala-gamma-D-Glu-L-Lys-D-Ala-D-Ala)](n)-di-trans,octa-cis-undecaprenyl diphosphate + beta-D-GlcNAc-(1-&gt;4)-Mur2Ac(oyl-L-Ala-gamma-D-Glu-L-Lys-D-Ala-D-Ala)-di-trans,octa-cis-undecaprenyl diphosphate = [GlcNAc-(1-&gt;4)-Mur2Ac(oyl-L-Ala-gamma-D-Glu-L-Lys-D-Ala-D-Ala)](n+1)-di-trans,octa-cis-undecaprenyl diphosphate + di-trans,octa-cis-undecaprenyl diphosphate + H(+). It functions in the pathway cell wall biogenesis; peptidoglycan biosynthesis. In terms of biological role, peptidoglycan polymerase that is essential for cell division. This Acinetobacter baylyi (strain ATCC 33305 / BD413 / ADP1) protein is Probable peptidoglycan glycosyltransferase FtsW.